A 280-amino-acid chain; its full sequence is L-aspartate dehydrogenase (280 aa).

NAD(+)-binding residues include Ala134 and Asn202. Residue His232 is part of the active site.

The protein belongs to the L-aspartate dehydrogenase family.

The catalysed reaction is L-aspartate + NADP(+) + H2O = oxaloacetate + NH4(+) + NADPH + H(+). It catalyses the reaction L-aspartate + NAD(+) + H2O = oxaloacetate + NH4(+) + NADH + H(+). Its pathway is cofactor biosynthesis; NAD(+) biosynthesis; iminoaspartate from L-aspartate (dehydrogenase route): step 1/1. Functionally, specifically catalyzes the NAD or NADP-dependent dehydrogenation of L-aspartate to iminoaspartate. The chain is L-aspartate dehydrogenase from Bradyrhizobium diazoefficiens (strain JCM 10833 / BCRC 13528 / IAM 13628 / NBRC 14792 / USDA 110).